The following is a 165-amino-acid chain: Protein SprT (165 aa).

A SprT-like domain is found at 22-163 (LAQANLKLDR…RCVHCGEPLV (142 aa)). H78 contacts Zn(2+). E79 is a catalytic residue. Zn(2+) is bound at residue H82.

This sequence belongs to the SprT family. It depends on Zn(2+) as a cofactor.

It is found in the cytoplasm. The chain is Protein SprT from Salmonella paratyphi C (strain RKS4594).